A 364-amino-acid polypeptide reads, in one-letter code: GTPase Obg (364 aa).

One can recognise an Obg domain in the interval 1-159 (MKFVDEAYID…KSLKLELKVL (159 aa)). An OBG-type G domain is found at 160–334 (ADVGLLGMPN…LVKTIYQHVK (175 aa)). Residues 166–173 (GMPNAGKS), 191–195 (FTTLH), 213–216 (DLPG), 284–287 (NKLD), and 315–317 (SAL) each bind GTP. Residues serine 173 and threonine 193 each coordinate Mg(2+). The disordered stretch occupies residues 337-364 (QKSEQPEEEVDPRFIELPPEPAKPASSD).

Belongs to the TRAFAC class OBG-HflX-like GTPase superfamily. OBG GTPase family. As to quaternary structure, monomer. Mg(2+) is required as a cofactor.

It localises to the cytoplasm. Its function is as follows. An essential GTPase which binds GTP, GDP and possibly (p)ppGpp with moderate affinity, with high nucleotide exchange rates and a fairly low GTP hydrolysis rate. Plays a role in control of the cell cycle, stress response, ribosome biogenesis and in those bacteria that undergo differentiation, in morphogenesis control. The sequence is that of GTPase Obg from Polaromonas naphthalenivorans (strain CJ2).